We begin with the raw amino-acid sequence, 92 residues long: Evasin P942 (92 aa).

A signal peptide spans 1–26 (MEVKTFAFLQIAVLIALGLHLAPAGS). 3 disulfide bridges follow: Cys44–Cys63, Cys48–Cys65, and Cys59–Cys76. Asn47 is a glycosylation site (N-linked (GlcNAc...) asparagine). An N-linked (GlcNAc...) asparagine glycan is attached at Asn70.

It is found in the secreted. In terms of biological role, salivary chemokine-binding protein which binds to host chemokines CXCL1, CXCL2, CXCL3, CXCL4, CXCL5, CXCL6, CXCL10, CXCL11 and CXCL13. This Ixodes ricinus (Common tick) protein is Evasin P942.